Consider the following 359-residue polypeptide: Glycerol-1-phosphate dehydrogenase [NAD(P)+] (359 aa).

NAD(+)-binding positions include glycine 107 to aspartate 111 and threonine 129 to serine 132. Aspartate 134 contributes to the substrate binding site. Serine 138 contacts NAD(+). Aspartate 181 provides a ligand contact to substrate. 2 residues coordinate Zn(2+): aspartate 181 and histidine 261. A substrate-binding site is contributed by histidine 265. Residue histidine 277 coordinates Zn(2+).

This sequence belongs to the glycerol-1-phosphate dehydrogenase family. Zn(2+) serves as cofactor.

It localises to the cytoplasm. The enzyme catalyses sn-glycerol 1-phosphate + NAD(+) = dihydroxyacetone phosphate + NADH + H(+). The catalysed reaction is sn-glycerol 1-phosphate + NADP(+) = dihydroxyacetone phosphate + NADPH + H(+). It functions in the pathway membrane lipid metabolism; glycerophospholipid metabolism. Functionally, catalyzes the NAD(P)H-dependent reduction of dihydroxyacetonephosphate (DHAP or glycerone phosphate) to glycerol 1-phosphate (G1P). The G1P thus generated is used as the glycerophosphate backbone of phospholipids in the cellular membranes of Archaea. In Methanosphaerula palustris (strain ATCC BAA-1556 / DSM 19958 / E1-9c), this protein is Glycerol-1-phosphate dehydrogenase [NAD(P)+].